Here is a 171-residue protein sequence, read N- to C-terminus: Sec-independent protein translocase protein TatB (171 aa).

The chain crosses the membrane as a helical span at residues 1–21; that stretch reads MFDIGFSELLLVFIIGLVVLG. The segment at 89–171 is disordered; sequence AESMKRSYVA…APSPSSSDKP (83 aa). The span at 100-123 shows a compositional bias: basic and acidic residues; sequence DPEKASDEAHTIHNPVVKDNETAH. The segment covering 130–139 has biased composition (polar residues); it reads AAQTQASSPE.

This sequence belongs to the TatB family. The Tat system comprises two distinct complexes: a TatABC complex, containing multiple copies of TatA, TatB and TatC subunits, and a separate TatA complex, containing only TatA subunits. Substrates initially bind to the TatABC complex, which probably triggers association of the separate TatA complex to form the active translocon.

Its subcellular location is the cell inner membrane. In terms of biological role, part of the twin-arginine translocation (Tat) system that transports large folded proteins containing a characteristic twin-arginine motif in their signal peptide across membranes. Together with TatC, TatB is part of a receptor directly interacting with Tat signal peptides. TatB may form an oligomeric binding site that transiently accommodates folded Tat precursor proteins before their translocation. The chain is Sec-independent protein translocase protein TatB from Escherichia coli O1:K1 / APEC.